The chain runs to 79 residues: Acyl carrier protein (79 aa).

One can recognise a Carrier domain in the interval 1–79; sequence MTKEQILVDV…DVVSYIETQV (79 aa). S39 is subject to O-(pantetheine 4'-phosphoryl)serine.

It belongs to the acyl carrier protein (ACP) family. Post-translationally, 4'-phosphopantetheine is transferred from CoA to a specific serine of apo-ACP by AcpS. This modification is essential for activity because fatty acids are bound in thioester linkage to the sulfhydryl of the prosthetic group.

It localises to the cytoplasm. It functions in the pathway lipid metabolism; fatty acid biosynthesis. Functionally, carrier of the growing fatty acid chain in fatty acid biosynthesis. The protein is Acyl carrier protein of Exiguobacterium sibiricum (strain DSM 17290 / CCUG 55495 / CIP 109462 / JCM 13490 / 255-15).